The sequence spans 359 residues: Transcription factor bHLH130 (359 aa).

Ser-60 bears the Phosphoserine mark. The disordered stretch occupies residues 161 to 186 (EEDEESPSNSNGLRRHCSLSSRPPSS). Residues 167–184 (PSNSNGLRRHCSLSSRPP) are compositionally biased toward polar residues. One can recognise a bHLH domain in the interval 285–335 (CATHPRSIAERVRRTRISERMRKLQELVPNMDKQTNTSDMLDLAVDYIKDL).

Homodimer.

The protein localises to the nucleus. The protein is Transcription factor bHLH130 (BHLH130) of Arabidopsis thaliana (Mouse-ear cress).